We begin with the raw amino-acid sequence, 205 residues long: Ribonuclease HII (205 aa).

The RNase H type-2 domain occupies 14 to 201 (EIIAGVDEAG…KGNINHSAIL (188 aa)). Aspartate 20, glutamate 21, and aspartate 111 together coordinate a divalent metal cation.

Belongs to the RNase HII family. Requires Mn(2+) as cofactor. It depends on Mg(2+) as a cofactor.

It is found in the cytoplasm. The enzyme catalyses Endonucleolytic cleavage to 5'-phosphomonoester.. Endonuclease that specifically degrades the RNA of RNA-DNA hybrids. The chain is Ribonuclease HII from Orientia tsutsugamushi (strain Ikeda) (Rickettsia tsutsugamushi).